The sequence spans 258 residues: Acyl-[acyl-carrier-protein]--UDP-N-acetylglucosamine O-acyltransferase (258 aa).

Belongs to the transferase hexapeptide repeat family. LpxA subfamily. In terms of assembly, homotrimer.

The protein localises to the cytoplasm. The catalysed reaction is a (3R)-hydroxyacyl-[ACP] + UDP-N-acetyl-alpha-D-glucosamine = a UDP-3-O-[(3R)-3-hydroxyacyl]-N-acetyl-alpha-D-glucosamine + holo-[ACP]. Its pathway is glycolipid biosynthesis; lipid IV(A) biosynthesis; lipid IV(A) from (3R)-3-hydroxytetradecanoyl-[acyl-carrier-protein] and UDP-N-acetyl-alpha-D-glucosamine: step 1/6. Its function is as follows. Involved in the biosynthesis of lipid A, a phosphorylated glycolipid that anchors the lipopolysaccharide to the outer membrane of the cell. The protein is Acyl-[acyl-carrier-protein]--UDP-N-acetylglucosamine O-acyltransferase of Pseudomonas fluorescens (strain Pf0-1).